We begin with the raw amino-acid sequence, 545 residues long: E3 ubiquitin-protein ligase ipaH9.8 (545 aa).

Residues 1–242 (MLPINNNFSL…YHGPRIYFSM (242 aa)) are interaction with target proteins. LRR repeat units lie at residues 57-77 (NSDE…NLPA), 78-99 (QITL…PVTL), 100-117 (KKLY…VLPP), 118-139 (ALES…PDSL), 140-157 (LTMN…SLPQ), 158-179 (ALKN…SEGN), 182-203 (VVRE…ILNL), and 205-228 (NECS…QRLT). Positions 243–250 (SDGQQNTL) are linker. An E3 ubiquitin-protein ligase catalytic domain region spans residues 251 to 545 (HRPLADAVTA…SENGSQLHHS (295 aa)). The 293-residue stretch at 253–545 (PLADAVTAWF…SENGSQLHHS (293 aa)) folds into the NEL domain. Cys337 serves as the catalytic Glycyl thioester intermediate.

It belongs to the LRR-containing bacterial E3 ligase family. Also interacts with human and mouse U2AF1 (U2AF35). In terms of processing, ubiquitinated in the presence of host E1 ubiquitin-activating enzyme, E2 ubiquitin-conjugating enzyme and ubiquitin.

It localises to the secreted. It is found in the host cytoplasm. The protein localises to the host nucleus. The enzyme catalyses S-ubiquitinyl-[E2 ubiquitin-conjugating enzyme]-L-cysteine + [acceptor protein]-L-lysine = [E2 ubiquitin-conjugating enzyme]-L-cysteine + N(6)-ubiquitinyl-[acceptor protein]-L-lysine.. Exists in an autoinhibited state in the absence of substrate protein, due to interactions of the leucine-rich repeats with NEL domain. Is activated upon binding to a substrate protein. Effector E3 ubiquitin ligase that interferes with host's ubiquitination pathway and modulates the acute inflammatory responses, thus facilitating bacterial colonization within the host cell. Interacts with IKBKG (NEMO) and TNIP1 (ABIN-1), a ubiquitin-binding adapter protein, which results in TNIP1-dependent 'Lys-27'-linked polyubiquitination of IKBKG. Consequently, polyubiquitinated IKBKG undergoes proteasome-dependent degradation, which perturbs NF-kappa-B activation during bacterial infection. Mediates polyubiquitination of host U2AF1, leading to its proteasomal degradation. Catalyzes 'Lys-48'-linked polyubiquitination and subsequent degradation of a subset of host guanylate-binding proteins (GBP1, GBP2, GBP4 and GBP6), thereby suppressing host cell defense. In contrast, host GBP3 and GBP7 are not ubiquitinated by IpaH9.8. Uses UBE2D2 (UBCH5B) as an E2 ubiquitin-conjugating enzyme. The protein is E3 ubiquitin-protein ligase ipaH9.8 (ipaH9.8) of Shigella dysenteriae serotype 1 (strain Sd197).